A 205-amino-acid polypeptide reads, in one-letter code: Small ribosomal subunit protein uS4 (205 aa).

Positions M1–D12 are enriched in basic residues. The tract at residues M1 to G49 is disordered. In terms of domain architecture, S4 RNA-binding spans R94–V155.

The protein belongs to the universal ribosomal protein uS4 family. Part of the 30S ribosomal subunit. Contacts protein S5. The interaction surface between S4 and S5 is involved in control of translational fidelity.

One of the primary rRNA binding proteins, it binds directly to 16S rRNA where it nucleates assembly of the body of the 30S subunit. Functionally, with S5 and S12 plays an important role in translational accuracy. This is Small ribosomal subunit protein uS4 from Methylorubrum populi (strain ATCC BAA-705 / NCIMB 13946 / BJ001) (Methylobacterium populi).